Reading from the N-terminus, the 278-residue chain is Elongation factor Ts (278 aa).

An involved in Mg(2+) ion dislocation from EF-Tu region spans residues 80-83 (TDFV).

It belongs to the EF-Ts family.

It localises to the cytoplasm. Its function is as follows. Associates with the EF-Tu.GDP complex and induces the exchange of GDP to GTP. It remains bound to the aminoacyl-tRNA.EF-Tu.GTP complex up to the GTP hydrolysis stage on the ribosome. The protein is Elongation factor Ts of Pseudarthrobacter chlorophenolicus (strain ATCC 700700 / DSM 12829 / CIP 107037 / JCM 12360 / KCTC 9906 / NCIMB 13794 / A6) (Arthrobacter chlorophenolicus).